The following is a 647-amino-acid chain: Shugoshin-2 (647 aa).

Ser-7 carries the post-translational modification Phosphoserine. Coiled-coil stretches lie at residues Ser-28–Glu-87 and Asp-125–Ser-145. A disordered region spans residues Arg-171–Lys-295. A compositionally biased stretch (low complexity) spans Asn-200 to Asn-210. The residue at position 240 (Ser-240) is a Phosphoserine. 2 stretches are compositionally biased toward polar residues: residues Lys-242 to Ala-253 and Arg-282 to Pro-293. Position 292 is a phosphothreonine (Thr-292). Phosphoserine occurs at positions 332 and 335. 2 stretches are compositionally biased toward polar residues: residues Ser-375–Val-396 and Glu-462–Pro-478. Disordered regions lie at residues Ser-375–Val-416, Arg-453–Gly-486, Thr-522–Lys-579, and Arg-593–Leu-647. Composition is skewed to basic and acidic residues over residues Asn-528 to Glu-541 and Arg-593 to Val-602. Residues Lys-621–Leu-647 are compositionally biased toward polar residues.

The protein belongs to the shugoshin family.

The protein localises to the chromosome. Its subcellular location is the centromere. Involved in chromosome cohesion during mitosis and meiosis by preventing premature dissociation of cohesin complex from centromeres after prophase, when most of cohesin complex dissociates from chromosomes arms. Required for faithful mitotic chromosome segregation and proper kinetochore orientation during meiosis I. In contrast to sgo1, it is dispensable for centromeric protection of rec8 during meiosis I as well as protection of rad21 during mitosis. Required to sense the lack of tension at centromeres during mitosis. The sequence is that of Shugoshin-2 (sgo2) from Schizosaccharomyces pombe (strain 972 / ATCC 24843) (Fission yeast).